Here is a 306-residue protein sequence, read N- to C-terminus: Glutaminase (306 aa).

Ser-64, Asn-115, Glu-159, Asn-166, Tyr-190, Tyr-242, and Val-260 together coordinate substrate.

Belongs to the glutaminase family. In terms of assembly, homotetramer.

It catalyses the reaction L-glutamine + H2O = L-glutamate + NH4(+). This Aliivibrio fischeri (strain ATCC 700601 / ES114) (Vibrio fischeri) protein is Glutaminase.